Here is a 195-residue protein sequence, read N- to C-terminus: Large ribosomal subunit protein uL18 (195 aa).

This sequence belongs to the universal ribosomal protein uL18 family. As to quaternary structure, part of the 50S ribosomal subunit. Contacts the 5S and 23S rRNAs.

In terms of biological role, this is one of the proteins that bind and probably mediate the attachment of the 5S RNA into the large ribosomal subunit, where it forms part of the central protuberance. This chain is Large ribosomal subunit protein uL18, found in Nanoarchaeum equitans (strain Kin4-M).